The chain runs to 378 residues: S-(hydroxymethyl)glutathione dehydrogenase (378 aa).

Zn(2+)-binding residues include C49, H71, C101, C104, C107, C115, and C178.

The protein belongs to the zinc-containing alcohol dehydrogenase family. Class-III subfamily. As to quaternary structure, homodimer. Zn(2+) serves as cofactor.

The protein resides in the cytoplasm. It carries out the reaction S-(hydroxymethyl)glutathione + NADP(+) = S-formylglutathione + NADPH + H(+). It catalyses the reaction S-(hydroxymethyl)glutathione + NAD(+) = S-formylglutathione + NADH + H(+). The enzyme catalyses a primary alcohol + NAD(+) = an aldehyde + NADH + H(+). The catalysed reaction is a secondary alcohol + NAD(+) = a ketone + NADH + H(+). It carries out the reaction S-nitrosoglutathione + NADH + H(+) = S-(hydroxysulfenamide)glutathione + NAD(+). Has high formaldehyde dehydrogenase activity in the presence of glutathione and catalyzes the oxidation of normal alcohols in a reaction that is not GSH-dependent. In addition, hemithiolacetals other than those formed from GSH, including omega-thiol fatty acids, also are substrates. Also acts as a S-nitroso-glutathione reductase by catalyzing the NADH-dependent reduction of S-nitrosoglutathione. The chain is S-(hydroxymethyl)glutathione dehydrogenase (frmA) from Haemophilus influenzae (strain ATCC 51907 / DSM 11121 / KW20 / Rd).